A 250-amino-acid polypeptide reads, in one-letter code: Adenosylcobinamide-GDP ribazoletransferase (250 aa).

6 helical membrane passes run 33–53, 63–83, 109–129, 137–157, 180–200, and 203–223; these read IASY…LLYI, IVMT…HIDG, LGTN…LFLT, LTAL…SMMI, FAIA…LAVF, and ILTI…LRIG.

Belongs to the CobS family. It depends on Mg(2+) as a cofactor.

It localises to the cell membrane. It carries out the reaction alpha-ribazole + adenosylcob(III)inamide-GDP = adenosylcob(III)alamin + GMP + H(+). The catalysed reaction is alpha-ribazole 5'-phosphate + adenosylcob(III)inamide-GDP = adenosylcob(III)alamin 5'-phosphate + GMP + H(+). It participates in cofactor biosynthesis; adenosylcobalamin biosynthesis; adenosylcobalamin from cob(II)yrinate a,c-diamide: step 7/7. In terms of biological role, joins adenosylcobinamide-GDP and alpha-ribazole to generate adenosylcobalamin (Ado-cobalamin). Also synthesizes adenosylcobalamin 5'-phosphate from adenosylcobinamide-GDP and alpha-ribazole 5'-phosphate. This chain is Adenosylcobinamide-GDP ribazoletransferase, found in Thermoanaerobacter pseudethanolicus (strain ATCC 33223 / 39E) (Clostridium thermohydrosulfuricum).